The primary structure comprises 231 residues: MTTLDLTRAELALIVLYLNKAEARDKICRAIQYGSKFLSGGQPGTAQTVDKNTSLARKVFRLFKFVNDFHGLISPVPKGTPLPLVLLGKSKNALLSTFLFLDQIVWLGRSGIYKNKERTELLGRISLFCWLGSSVCTSAVEIGELGRLSSSMKKMEKELKADDELYRAKLQKSNDRTLALIKSSMDIIVAIGLLQLAPKTISPRVTGAFGFTTSLISCYQLLPSRPKLKTP.

The Cytoplasmic portion of the chain corresponds to 1–91; sequence MTTLDLTRAE…LPLVLLGKSK (91 aa). A helical membrane pass occupies residues 92–108; it reads NALLSTFLFLDQIVWLG. At 109–202 the chain is on the lumenal side; that stretch reads RSGIYKNKER…LLQLAPKTIS (94 aa). Residues 203-222 traverse the membrane as a helical segment; it reads PRVTGAFGFTTSLISCYQLL. The Cytoplasmic segment spans residues 223–231; that stretch reads PSRPKLKTP.

This sequence belongs to the peroxin-11 family. In terms of assembly, homooligomer. Interacts with ARC5 and FIS1B on peroxisomes. As to expression, expressed in leaves and developing siliques.

Its subcellular location is the peroxisome membrane. In terms of biological role, involved in peroxisomal proliferation. Promotes peroxisomal duplication, aggregation or elongation without fission. The chain is Peroxisomal membrane protein 11E (PEX11E) from Arabidopsis thaliana (Mouse-ear cress).